Reading from the N-terminus, the 299-residue chain is Mycothiol acetyltransferase (299 aa).

N-acetyltransferase domains are found at residues Met1–Gly156 and Val149–Leu299. Residue Glu33 participates in 1D-myo-inositol 2-(L-cysteinylamino)-2-deoxy-alpha-D-glucopyranoside binding. Acetyl-CoA contacts are provided by residues Leu75–Val77 and Arg83–Thr88. Residues Glu176, Lys218, and Glu231 each coordinate 1D-myo-inositol 2-(L-cysteinylamino)-2-deoxy-alpha-D-glucopyranoside. Residues Val235–Ile237 and Gln242–Arg248 each bind acetyl-CoA. Tyr269 contributes to the 1D-myo-inositol 2-(L-cysteinylamino)-2-deoxy-alpha-D-glucopyranoside binding site. Position 274–279 (Asn274–His279) interacts with acetyl-CoA.

The protein belongs to the acetyltransferase family. MshD subfamily. As to quaternary structure, monomer.

The catalysed reaction is 1D-myo-inositol 2-(L-cysteinylamino)-2-deoxy-alpha-D-glucopyranoside + acetyl-CoA = mycothiol + CoA + H(+). Its function is as follows. Catalyzes the transfer of acetyl from acetyl-CoA to desacetylmycothiol (Cys-GlcN-Ins) to form mycothiol. This chain is Mycothiol acetyltransferase, found in Rhodococcus erythropolis (strain PR4 / NBRC 100887).